The chain runs to 851 residues: Protein translocase subunit SecA (851 aa).

ATP is bound by residues glutamine 88, 106–110, and aspartate 496; that span reads GEGKT. The Zn(2+) site is built by cysteine 828, cysteine 830, cysteine 839, and histidine 840.

This sequence belongs to the SecA family. Monomer and homodimer. Part of the essential Sec protein translocation apparatus which comprises SecA, SecYEG and auxiliary proteins SecDF-YajC and YidC. Zn(2+) serves as cofactor.

The protein localises to the cell inner membrane. The protein resides in the cytoplasm. It catalyses the reaction ATP + H2O + cellular proteinSide 1 = ADP + phosphate + cellular proteinSide 2.. In terms of biological role, part of the Sec protein translocase complex. Interacts with the SecYEG preprotein conducting channel. Has a central role in coupling the hydrolysis of ATP to the transfer of proteins into and across the cell membrane, serving as an ATP-driven molecular motor driving the stepwise translocation of polypeptide chains across the membrane. In Helicobacter hepaticus (strain ATCC 51449 / 3B1), this protein is Protein translocase subunit SecA.